Reading from the N-terminus, the 103-residue chain is Small ribosomal subunit protein bS6c (103 aa).

The protein belongs to the bacterial ribosomal protein bS6 family.

The protein resides in the plastid. Its subcellular location is the chloroplast. In terms of biological role, binds together with bS18 to 16S ribosomal RNA. This chain is Small ribosomal subunit protein bS6c, found in Thalassiosira pseudonana (Marine diatom).